A 292-amino-acid polypeptide reads, in one-letter code: 4-hydroxy-tetrahydrodipicolinate synthase (292 aa).

A pyruvate-binding site is contributed by Thr45. Tyr133 serves as the catalytic Proton donor/acceptor. Residue Lys161 is the Schiff-base intermediate with substrate of the active site. Ile203 is a binding site for pyruvate.

The protein belongs to the DapA family. As to quaternary structure, homodimer.

Its subcellular location is the cytoplasm. It carries out the reaction L-aspartate 4-semialdehyde + pyruvate = (2S,4S)-4-hydroxy-2,3,4,5-tetrahydrodipicolinate + H2O + H(+). It functions in the pathway amino-acid biosynthesis; L-lysine biosynthesis via DAP pathway; (S)-tetrahydrodipicolinate from L-aspartate: step 3/4. Its function is as follows. Catalyzes the condensation of (S)-aspartate-beta-semialdehyde [(S)-ASA] and pyruvate to 4-hydroxy-tetrahydrodipicolinate (HTPA). This chain is 4-hydroxy-tetrahydrodipicolinate synthase, found in Stutzerimonas stutzeri (strain A1501) (Pseudomonas stutzeri).